A 338-amino-acid chain; its full sequence is Fructose-1,6-bisphosphatase class 1 (338 aa).

Residues Glu92, Asp114, Leu116, and Asp117 each contribute to the Mg(2+) site. Residues 117–120, Asn210, Tyr243, and Lys276 each bind substrate; that span reads DGSS. Mg(2+) is bound at residue Glu282.

Belongs to the FBPase class 1 family. As to quaternary structure, homotetramer. The cofactor is Mg(2+).

The protein localises to the cytoplasm. It carries out the reaction beta-D-fructose 1,6-bisphosphate + H2O = beta-D-fructose 6-phosphate + phosphate. It functions in the pathway carbohydrate biosynthesis; gluconeogenesis. This is Fructose-1,6-bisphosphatase class 1 from Maridesulfovibrio salexigens (strain ATCC 14822 / DSM 2638 / NCIMB 8403 / VKM B-1763) (Desulfovibrio salexigens).